Here is a 594-residue protein sequence, read N- to C-terminus: MAAAAVVAATVPVQSMGADGASSVHWFRKGLRLHDNPALLAAVRGARCVRCVYILDPWFAASSSVGINRWRFLLQSLEDLDTSLRKLNSRLFVVRGQPADVFPRLFKEWGVTRLTFEYDSEPFGKERDAAIMKMAKEAGVEVVTENSHTLYDLDRIIELNGQKPPLTYKRFQALISRMELPKKPVGAVSSQHMENCRAEIQENHDDTYGVPSLEELGFPTEGLGPAVWQGGETEALVRLDKHLERKAWVANYERPRMNANSLLASPTGLSPYLRFGCLSCRLFYYRLWDLYRKVKRNSTPPLSLFGQLLWREFFYTAATNNPRFDRMEGNPICIQIPWDRNPEALAKWAEGKTGFPWIDAIMTQLRQEGWIHHLARHAVACFLTRGDLWVSWESGVRVFDELLLDADFSVNAGSWMWLSCSAFFQQFFHCYCPVGFGRRTDPSGDYIRRYLPKLKGFPSRYIYEPWNAPESVQKAANCIIGVDYPRPIVNHAETSRLNIERMKQIYQQLSRYRGLCLWASVPSCVEDLSHPVAEPGSSQAGSISNTGPRPLSSGPASPKRKLEAAEEPPGEELSKRARVTVTQMPAQEPPSKDS.

The Photolyase/cryptochrome alpha/beta domain maps to 21–150; it reads ASSVHWFRKG…EVVTENSHTL (130 aa). Lys-29 is covalently cross-linked (Glycyl lysine isopeptide (Lys-Gly) (interchain with G-Cter in ubiquitin)). Ser-89 carries the phosphoserine modification. Residues Lys-125 and Lys-241 each participate in a glycyl lysine isopeptide (Lys-Gly) (interchain with G-Cter in ubiquitin) cross-link. Ser-265 carries the phosphoserine; by MAPK modification. Ser-270 provides a ligand contact to FAD. Residue Ser-298 is modified to Phosphoserine. FAD is bound at residue Gln-307. Lys-347 participates in a covalent cross-link: Glycyl lysine isopeptide (Lys-Gly) (interchain with G-Cter in ubiquitin). FAD is bound by residues His-373 and 405-407; that span reads DAD. The tract at residues 389-488 is required for inhibition of CLOCK-BMAL1-mediated transcription; the sequence is WVSWESGVRV…IIGVDYPRPI (100 aa). Residues Lys-474 and Lys-503 each participate in a glycyl lysine isopeptide (Lys-Gly) (interchain with G-Cter in ubiquitin) cross-link. A disordered region spans residues 532–594; that stretch reads VAEPGSSQAG…PAQEPPSKDS (63 aa). Polar residues predominate over residues 536–547; that stretch reads GSSQAGSISNTG. A Phosphoserine; by GSK3-beta modification is found at Ser-553. The residue at position 557 (Ser-557) is a Phosphoserine; by DYRK1A and MAPK.

Belongs to the DNA photolyase class-1 family. Component of the circadian core oscillator, which includes the CRY proteins, CLOCK or NPAS2, BMAL1 or BMAL2, CSNK1D and/or CSNK1E, TIMELESS, and the PER proteins. Interacts with TIMELESS. Interacts directly with PER1, PER2 and PER3; interaction with PER2 inhibits its ubiquitination and vice versa. Interacts with CLOCK-BMAL1. Interacts with CLOCK. Interacts with BMAL1. Interacts with NFIL3. Interacts with FBXL3 and FBXL21. FBXL3, PER2 and the cofactor FAD compete for overlapping binding sites. FBXL3 cannot bind CRY2 that interacts already with PER2 or that contains bound FAD. Interacts with PPP5C (via TPR repeats); the interaction down-regulates the PPP5C phosphatase activity on CSNK1E. Interacts with nuclear receptors AR and NR3C1/GR; the interaction is ligand dependent. Interacts with PRKDC and CIART. Interacts with DDB1, USP7 and TARDBP. Interacts with HNF4A and PPARA. Interacts with PPARD (via domain NR LBD) and NR1I2 (via domain NR LBD) in a ligand-dependent manner. Interacts with PPARG, NR1I3 and VDR in a ligand-dependent manner. FAD serves as cofactor. It depends on (6R)-5,10-methylene-5,6,7,8-tetrahydrofolate as a cofactor. In terms of processing, phosphorylation on Ser-265 by MAPK is important for the inhibition of CLOCK-BMAL1-mediated transcriptional activity. Phosphorylation by CSKNe requires interaction with PER1 or PER2. Phosphorylated in a circadian manner at Ser-553 and Ser-557 in the suprachiasmatic nucleus (SCN) and liver. Phosphorylation at Ser-557 by DYRK1A promotes subsequent phosphorylation at Ser-553 by GSK3-beta: the two-step phosphorylation at the neighboring Ser residues leads to its proteasomal degradation. Post-translationally, ubiquitinated by the SCF(FBXL3) and SCF(FBXL21) complexes, regulating the balance between degradation and stabilization. The SCF(FBXL3) complex is mainly nuclear and mediates ubiquitination and subsequent degradation of CRY2. In contrast, cytoplasmic SCF(FBXL21) complex-mediated ubiquitination leads to stabilize CRY2 and counteract the activity of the SCF(FBXL3) complex. The SCF(FBXL3) and SCF(FBXL21) complexes probably mediate ubiquitination at different Lys residues. The SCF(FBXL3) complex recognizes and binds CRY2 phosphorylated at Ser-553 and Ser-557. Ubiquitination may be inhibited by PER2. Deubiquitinated by USP7. In terms of tissue distribution, expressed in all tissues examined including heart, cerebellum, cerebral cortex, lung, liver, muscle, kidney and ovary. Highest levels in heart, liver and ovary. Highly expressed in the suprachiasmatic nucleus (SCN).

The protein localises to the cytoplasm. It is found in the nucleus. Functionally, transcriptional repressor which forms a core component of the circadian clock. The circadian clock, an internal time-keeping system, regulates various physiological processes through the generation of approximately 24 hour circadian rhythms in gene expression, which are translated into rhythms in metabolism and behavior. It is derived from the Latin roots 'circa' (about) and 'diem' (day) and acts as an important regulator of a wide array of physiological functions including metabolism, sleep, body temperature, blood pressure, endocrine, immune, cardiovascular, and renal function. Consists of two major components: the central clock, residing in the suprachiasmatic nucleus (SCN) of the brain, and the peripheral clocks that are present in nearly every tissue and organ system. Both the central and peripheral clocks can be reset by environmental cues, also known as Zeitgebers (German for 'timegivers'). The predominant Zeitgeber for the central clock is light, which is sensed by retina and signals directly to the SCN. The central clock entrains the peripheral clocks through neuronal and hormonal signals, body temperature and feeding-related cues, aligning all clocks with the external light/dark cycle. Circadian rhythms allow an organism to achieve temporal homeostasis with its environment at the molecular level by regulating gene expression to create a peak of protein expression once every 24 hours to control when a particular physiological process is most active with respect to the solar day. Transcription and translation of core clock components (CLOCK, NPAS2, BMAL1, BMAL2, PER1, PER2, PER3, CRY1 and CRY2) plays a critical role in rhythm generation, whereas delays imposed by post-translational modifications (PTMs) are important for determining the period (tau) of the rhythms (tau refers to the period of a rhythm and is the length, in time, of one complete cycle). A diurnal rhythm is synchronized with the day/night cycle, while the ultradian and infradian rhythms have a period shorter and longer than 24 hours, respectively. Disruptions in the circadian rhythms contribute to the pathology of cardiovascular diseases, cancer, metabolic syndromes and aging. A transcription/translation feedback loop (TTFL) forms the core of the molecular circadian clock mechanism. Transcription factors, CLOCK or NPAS2 and BMAL1 or BMAL2, form the positive limb of the feedback loop, act in the form of a heterodimer and activate the transcription of core clock genes and clock-controlled genes (involved in key metabolic processes), harboring E-box elements (5'-CACGTG-3') within their promoters. The core clock genes: PER1/2/3 and CRY1/2 which are transcriptional repressors form the negative limb of the feedback loop and interact with the CLOCK|NPAS2-BMAL1|BMAL2 heterodimer inhibiting its activity and thereby negatively regulating their own expression. This heterodimer also activates nuclear receptors NR1D1/2 and RORA/B/G, which form a second feedback loop and which activate and repress BMAL1 transcription, respectively. CRY1 and CRY2 have redundant functions but also differential and selective contributions at least in defining the pace of the SCN circadian clock and its circadian transcriptional outputs. Less potent transcriptional repressor in cerebellum and liver than CRY1, though less effective in lengthening the period of the SCN oscillator. Seems to play a critical role in tuning SCN circadian period by opposing the action of CRY1. With CRY1, dispensable for circadian rhythm generation but necessary for the development of intercellular networks for rhythm synchrony. May mediate circadian regulation of cAMP signaling and gluconeogenesis by blocking glucagon-mediated increases in intracellular cAMP concentrations and in CREB1 phosphorylation. Besides its role in the maintenance of the circadian clock, is also involved in the regulation of other processes. Plays a key role in glucose and lipid metabolism modulation, in part, through the transcriptional regulation of genes involved in these pathways, such as LEP or ACSL4. Represses glucocorticoid receptor NR3C1/GR-induced transcriptional activity by binding to glucocorticoid response elements (GREs). Represses the CLOCK-BMAL1 induced transcription of BHLHE40/DEC1 and NAMPT. Represses PPARD and its target genes in the skeletal muscle and limits exercise capacity. Represses the transcriptional activity of NR1I2. This is Cryptochrome-2 (Cry2) from Rattus norvegicus (Rat).